The primary structure comprises 385 residues: Glucans biosynthesis protein C (385 aa).

The next 10 helical transmembrane spans lie at 17–39 (AWLM…TWHV), 54–76 (FIHS…MLFL), 88–110 (VERV…FIML), 136–158 (LISH…WIFK), 179–198 (LSVI…RTIF), 213–235 (IVMQ…IFPH), 242–261 (TPSR…YLLN), 276–295 (SVIT…SFGH), 308–330 (FVNA…GAYI), and 334–356 (ITSN…IILY).

It belongs to the acyltransferase 3 family. OpgC subfamily.

The protein resides in the cell membrane. It participates in glycan metabolism; osmoregulated periplasmic glucan (OPG) biosynthesis. In terms of biological role, necessary for the succinyl substitution of periplasmic glucans. Could catalyze the transfer of succinyl residues from the cytoplasmic side of the membrane to the nascent glucan backbones on the periplasmic side of the membrane. The protein is Glucans biosynthesis protein C of Escherichia coli O157:H7.